Here is a 454-residue protein sequence, read N- to C-terminus: MSSGAPQKSSPMASGAEETPGFLDTLLQDFPALLNPEDPLPWKAPGTVLSQEEVEGELAELAMGFLGSRKAPPPLAAALAHEAVSQLLQTDLSEFRKLPREEEEEEEDDDEEEKAPVTLLDAQSLAQSFFNRLWEVAGQWQKQVPLAARASQRQWLVSIHAIRNTRRKMEDRHVSLPSFNQLFGLSDPVNRAYFAVFDGHGGVDAARYAAVHVHTNAARQPELPTDPEGALREAFRRTDQMFLRKAKRERLQSGTTGVCALIAGATLHVAWLGDSQVILVQQGQVVKLMEPHRPERQDEKARIEALGGFVSHMDCWRVNGTLAVSRAIGDVFQKPYVSGEADAASRALTGSEDYLLLACDGFFDVVPHQEVVGLVQSHLTRQQGSGLRVAEELVAAARERGSHDNITVMVVFLRDPQELLEGGNQGEGDPQAEGRRQDLPSSLPEPETQAPPRS.

Residues 1–12 are compositionally biased toward polar residues; it reads MSSGAPQKSSPM. The disordered stretch occupies residues 1–28; sequence MSSGAPQKSSPMASGAEETPGFLDTLLQ. The PPM-type phosphatase domain maps to 156–413; the sequence is LVSIHAIRNT…DNITVMVVFL (258 aa). Mn(2+) contacts are provided by D198, G199, D360, and D404. A disordered region spans residues 419–454; sequence LLEGGNQGEGDPQAEGRRQDLPSSLPEPETQAPPRS. At S454 the chain carries Phosphoserine.

This sequence belongs to the PP2C family. In terms of assembly, associates with FEM1B. Mg(2+) serves as cofactor. The cofactor is Mn(2+).

It catalyses the reaction O-phospho-L-seryl-[protein] + H2O = L-seryl-[protein] + phosphate. It carries out the reaction O-phospho-L-threonyl-[protein] + H2O = L-threonyl-[protein] + phosphate. Functionally, dephosphorylates and concomitantly deactivates CaM-kinase II activated upon autophosphorylation, and CaM-kinases IV and I activated upon phosphorylation by CaM-kinase kinase. Promotes apoptosis. The sequence is that of Protein phosphatase 1F (PPM1F) from Homo sapiens (Human).